Reading from the N-terminus, the 151-residue chain is Testis-expressed protein 29 (151 aa).

At 1-56 the chain is on the extracellular side; the sequence is MEYVLEVKNSPRHLLKQFTVCDVPLYDICDYNVSRDRCQELGCCFYEGVCYKKAVP. Residues 57–77 form a helical membrane-spanning segment; it reads IYIHVFSALIVIIAGAFVITI. Residues 78-151 lie on the Cytoplasmic side of the membrane; it reads IYRVIQESRK…TITEAEETED (74 aa). A disordered region spans residues 100-151; that stretch reads KSSEKAELASSSSKLGLKPASPGPPSAGPSMKSDEDKDDVTGTITEAEETED. Residues 107–119 show a composition bias toward low complexity; the sequence is LASSSSKLGLKPA.

The protein localises to the membrane. This Homo sapiens (Human) protein is Testis-expressed protein 29 (TEX29).